A 221-amino-acid chain; its full sequence is NADH-ubiquinone oxidoreductase chain 6 (221 aa).

5 helical membrane-spanning segments follow: residues 18-38 (FVEY…IYVI), 44-64 (IVSV…LNII), 74-94 (IIVY…LINI), 107-127 (IPLT…MLPY), and 195-215 (IWLI…IVIT).

This sequence belongs to the complex I subunit 6 family.

The protein localises to the mitochondrion membrane. The enzyme catalyses a ubiquinone + NADH + 5 H(+)(in) = a ubiquinol + NAD(+) + 4 H(+)(out). In terms of biological role, core subunit of the mitochondrial membrane respiratory chain NADH dehydrogenase (Complex I) that is believed to belong to the minimal assembly required for catalysis. Complex I functions in the transfer of electrons from NADH to the respiratory chain. The immediate electron acceptor for the enzyme is believed to be ubiquinone. This Podospora anserina (strain S / ATCC MYA-4624 / DSM 980 / FGSC 10383) (Pleurage anserina) protein is NADH-ubiquinone oxidoreductase chain 6 (ND6).